The chain runs to 120 residues: UPF0715 membrane protein YwlA (120 aa).

4 helical membrane-spanning segments follow: residues 3–23 (YNYTVLLSAFTMSVLYSVIYI), 26–46 (FIIAALITMAFYFLFPYLIFA), 63–83 (LYLLYYLAAAFIANAIIFGML), and 95–115 (AFYLFAVLTALIYWIWDSVLL).

The protein belongs to the UPF0715 family.

Its subcellular location is the cell membrane. This is UPF0715 membrane protein YwlA (ywlA) from Bacillus subtilis (strain 168).